The chain runs to 103 residues: Ig kappa-b5 chain C region (103 aa).

In terms of domain architecture, Ig-like spans 5–99; it reads PTVLIFPPAP…GAGSVVQSFS (95 aa). A disulfide bond links Cys26 and Cys85.

The chain is Ig kappa-b5 chain C region from Oryctolagus cuniculus (Rabbit).